The following is a 219-amino-acid chain: Uracil-DNA glycosylase (219 aa).

Residue aspartate 61 is the Proton acceptor of the active site.

Belongs to the uracil-DNA glycosylase (UDG) superfamily. UNG family.

It is found in the cytoplasm. The enzyme catalyses Hydrolyzes single-stranded DNA or mismatched double-stranded DNA and polynucleotides, releasing free uracil.. In terms of biological role, excises uracil residues from the DNA which can arise as a result of misincorporation of dUMP residues by DNA polymerase or due to deamination of cytosine. This is Uracil-DNA glycosylase from Haemophilus influenzae (strain 86-028NP).